Reading from the N-terminus, the 477-residue chain is Aspartyl/glutamyl-tRNA(Asn/Gln) amidotransferase subunit B (477 aa).

Belongs to the GatB/GatE family. GatB subfamily. In terms of assembly, heterotrimer of A, B and C subunits.

It carries out the reaction L-glutamyl-tRNA(Gln) + L-glutamine + ATP + H2O = L-glutaminyl-tRNA(Gln) + L-glutamate + ADP + phosphate + H(+). The enzyme catalyses L-aspartyl-tRNA(Asn) + L-glutamine + ATP + H2O = L-asparaginyl-tRNA(Asn) + L-glutamate + ADP + phosphate + 2 H(+). In terms of biological role, allows the formation of correctly charged Asn-tRNA(Asn) or Gln-tRNA(Gln) through the transamidation of misacylated Asp-tRNA(Asn) or Glu-tRNA(Gln) in organisms which lack either or both of asparaginyl-tRNA or glutaminyl-tRNA synthetases. The reaction takes place in the presence of glutamine and ATP through an activated phospho-Asp-tRNA(Asn) or phospho-Glu-tRNA(Gln). This chain is Aspartyl/glutamyl-tRNA(Asn/Gln) amidotransferase subunit B, found in Oenococcus oeni (strain ATCC BAA-331 / PSU-1).